Reading from the N-terminus, the 430-residue chain is Adenylosuccinate synthetase (430 aa).

Residues G13–K19 and G41–T43 each bind GTP. Residue D14 is the Proton acceptor of the active site. Mg(2+)-binding residues include D14 and G41. IMP is bound by residues D14 to K17, N39 to H42, T130, R144, Q225, T240, and R304. Residue H42 is the Proton donor of the active site. Residue A300–R306 participates in substrate binding. Residues R306, K332–D334, and S414–G416 contribute to the GTP site.

Belongs to the adenylosuccinate synthetase family. As to quaternary structure, homodimer. The cofactor is Mg(2+).

The protein localises to the cytoplasm. The catalysed reaction is IMP + L-aspartate + GTP = N(6)-(1,2-dicarboxyethyl)-AMP + GDP + phosphate + 2 H(+). Its pathway is purine metabolism; AMP biosynthesis via de novo pathway; AMP from IMP: step 1/2. Plays an important role in the de novo pathway of purine nucleotide biosynthesis. Catalyzes the first committed step in the biosynthesis of AMP from IMP. In Xylella fastidiosa (strain 9a5c), this protein is Adenylosuccinate synthetase.